A 66-amino-acid polypeptide reads, in one-letter code: Large ribosomal subunit protein uL29 (66 aa).

This sequence belongs to the universal ribosomal protein uL29 family.

The chain is Large ribosomal subunit protein uL29 from Francisella philomiragia subsp. philomiragia (strain ATCC 25017 / CCUG 19701 / FSC 153 / O#319-036).